The chain runs to 612 residues: Dihydroxy-acid dehydratase (612 aa).

Residue Asp81 coordinates Mg(2+). Cys122 contributes to the [2Fe-2S] cluster binding site. Mg(2+)-binding residues include Asp123 and Lys124. N6-carboxylysine is present on Lys124. Position 196 (Cys196) interacts with [2Fe-2S] cluster. Mg(2+) is bound at residue Glu492. Ser518 acts as the Proton acceptor in catalysis.

The protein belongs to the IlvD/Edd family. Homodimer. Requires [2Fe-2S] cluster as cofactor. Mg(2+) serves as cofactor.

It catalyses the reaction (2R)-2,3-dihydroxy-3-methylbutanoate = 3-methyl-2-oxobutanoate + H2O. The enzyme catalyses (2R,3R)-2,3-dihydroxy-3-methylpentanoate = (S)-3-methyl-2-oxopentanoate + H2O. Its pathway is amino-acid biosynthesis; L-isoleucine biosynthesis; L-isoleucine from 2-oxobutanoate: step 3/4. It functions in the pathway amino-acid biosynthesis; L-valine biosynthesis; L-valine from pyruvate: step 3/4. Its function is as follows. Functions in the biosynthesis of branched-chain amino acids. Catalyzes the dehydration of (2R,3R)-2,3-dihydroxy-3-methylpentanoate (2,3-dihydroxy-3-methylvalerate) into 2-oxo-3-methylpentanoate (2-oxo-3-methylvalerate) and of (2R)-2,3-dihydroxy-3-methylbutanoate (2,3-dihydroxyisovalerate) into 2-oxo-3-methylbutanoate (2-oxoisovalerate), the penultimate precursor to L-isoleucine and L-valine, respectively. This is Dihydroxy-acid dehydratase from Cereibacter sphaeroides (strain ATCC 17029 / ATH 2.4.9) (Rhodobacter sphaeroides).